The chain runs to 609 residues: MKSLLFVVFIFLTTTYAAKVSFKVIAPDAKNRVHVNINGVLVELKASDPDVPYYTGFAELKHGQSYNYVVDGNAEPFKRLLNGSSTKNEFFNRPVTYATNIPELPSILTEGSWTRGDTSNPIWDSNYVPSIFVTGNPREMNELIENVKKNTYKTKITFIGPETINTFEGCTLGLHKPGRKHNDAKQSWIWALPEGQFMANRNWFKIRHMEEDPTQLREKLYADILRKMGTYANEANMVRFFINKEGMGIFNMLDDVIMYSYINAMFYHGDTPEQLGGLYDGASGASFNFPGDFDSFIPNVESPLDQDAIEPFSKAFTSIDFLEDEQVKTIGKYFDYDQFLRFMVMEFLTGDWDGYWQEQTNDGAYIDINDHNKIYYLGQDFDATFGVNLEQKREFVNVSYTEYPKLFPGGVLINRLLQNPGVKKTFENYLKITVQEIFNNATLGPYVTARHEFLAPDLQWDRSIKQRSPGNIFGWTFEQTYENLFEGVTAPGKNSGGADWGLLEWVAAKEKAVKSYLSSSEAADAATVTQVPEAPGTDGTPSESTAWPHANTRFRQAEASNTHKIGTSSPSNFIVKIKQGTVSSSSSIKRTPCILPLVILASTLFASFF.

Residues 1 to 17 (MKSLLFVVFIFLTTTYA) form the signal peptide. Residues N82, N397, and N440 are each glycosylated (N-linked (GlcNAc...) asparagine). The disordered stretch occupies residues 527-547 (TVTQVPEAPGTDGTPSESTAW). S584 carries GPI-anchor amidated serine lipidation. Residues 585 to 609 (SSSIKRTPCILPLVILASTLFASFF) constitute a propeptide, removed in mature form.

It localises to the cell membrane. Functionally, may play a role in cell adhesion. This is Spore coat protein homolog 1 from Rhizopus delemar (strain RA 99-880 / ATCC MYA-4621 / FGSC 9543 / NRRL 43880) (Mucormycosis agent).